The following is a 313-amino-acid chain: 4-hydroxy-3-methylbut-2-enyl diphosphate reductase (313 aa).

Cys14 is a binding site for [4Fe-4S] cluster. (2E)-4-hydroxy-3-methylbut-2-enyl diphosphate-binding residues include His43 and His76. Dimethylallyl diphosphate-binding residues include His43 and His76. Isopentenyl diphosphate is bound by residues His43 and His76. Position 98 (Cys98) interacts with [4Fe-4S] cluster. His126 is a (2E)-4-hydroxy-3-methylbut-2-enyl diphosphate binding site. His126 lines the dimethylallyl diphosphate pocket. His126 provides a ligand contact to isopentenyl diphosphate. Glu128 functions as the Proton donor in the catalytic mechanism. A (2E)-4-hydroxy-3-methylbut-2-enyl diphosphate-binding site is contributed by Thr166. Cys196 provides a ligand contact to [4Fe-4S] cluster. Residues Ser224, Ser225, Asn226, and Ser269 each contribute to the (2E)-4-hydroxy-3-methylbut-2-enyl diphosphate site. Ser224, Ser225, Asn226, and Ser269 together coordinate dimethylallyl diphosphate. Residues Ser224, Ser225, Asn226, and Ser269 each coordinate isopentenyl diphosphate.

Belongs to the IspH family. Requires [4Fe-4S] cluster as cofactor.

The catalysed reaction is isopentenyl diphosphate + 2 oxidized [2Fe-2S]-[ferredoxin] + H2O = (2E)-4-hydroxy-3-methylbut-2-enyl diphosphate + 2 reduced [2Fe-2S]-[ferredoxin] + 2 H(+). It carries out the reaction dimethylallyl diphosphate + 2 oxidized [2Fe-2S]-[ferredoxin] + H2O = (2E)-4-hydroxy-3-methylbut-2-enyl diphosphate + 2 reduced [2Fe-2S]-[ferredoxin] + 2 H(+). Its pathway is isoprenoid biosynthesis; dimethylallyl diphosphate biosynthesis; dimethylallyl diphosphate from (2E)-4-hydroxy-3-methylbutenyl diphosphate: step 1/1. The protein operates within isoprenoid biosynthesis; isopentenyl diphosphate biosynthesis via DXP pathway; isopentenyl diphosphate from 1-deoxy-D-xylulose 5-phosphate: step 6/6. Functionally, catalyzes the conversion of 1-hydroxy-2-methyl-2-(E)-butenyl 4-diphosphate (HMBPP) into a mixture of isopentenyl diphosphate (IPP) and dimethylallyl diphosphate (DMAPP). Acts in the terminal step of the DOXP/MEP pathway for isoprenoid precursor biosynthesis. This is 4-hydroxy-3-methylbut-2-enyl diphosphate reductase from Tropheryma whipplei (strain TW08/27) (Whipple's bacillus).